The sequence spans 619 residues: 1-deoxy-D-xylulose-5-phosphate synthase (619 aa).

Residues His74 and 115–117 (GHS) each bind thiamine diphosphate. Asp146 is a binding site for Mg(2+). Residues 147–148 (GA), Asn175, Tyr285, and Glu365 contribute to the thiamine diphosphate site. Asn175 lines the Mg(2+) pocket.

This sequence belongs to the transketolase family. DXPS subfamily. In terms of assembly, homodimer. Mg(2+) serves as cofactor. Requires thiamine diphosphate as cofactor.

The catalysed reaction is D-glyceraldehyde 3-phosphate + pyruvate + H(+) = 1-deoxy-D-xylulose 5-phosphate + CO2. Its pathway is metabolic intermediate biosynthesis; 1-deoxy-D-xylulose 5-phosphate biosynthesis; 1-deoxy-D-xylulose 5-phosphate from D-glyceraldehyde 3-phosphate and pyruvate: step 1/1. Functionally, catalyzes the acyloin condensation reaction between C atoms 2 and 3 of pyruvate and glyceraldehyde 3-phosphate to yield 1-deoxy-D-xylulose-5-phosphate (DXP). The sequence is that of 1-deoxy-D-xylulose-5-phosphate synthase from Clostridium perfringens (strain 13 / Type A).